The chain runs to 115 residues: Waprin-like protein (115 aa).

Positions 1–21 (MNRSLLAFAIVLVLLVAGTSS) are cleaved as a signal peptide. Residues 23-69 (LFNKSGNCPMRNTVTSCTPRCIGDGECSSNQKCCPNKCGTTSCANSS) enclose the WAP domain. 4 disulfides stabilise this stretch: Cys30-Cys56, Cys39-Cys60, Cys43-Cys55, and Cys49-Cys65.

It belongs to the venom waprin family. Cys-rich waprin subfamily. As to expression, expressed by the venom gland.

The protein resides in the secreted. Antimicrobial peptides with activity against Gram-positive and Gram-negative bacteria as well as fungi. Recognizes carbohydrates in the microbial cell walls, and induces structural damage to them. Also inhibits microbial serine proteases, as well as mammalian elastases. Carbohydrates that are recognized are LPS, mannan, peptidoglycan, and N-acetl-D-glucosamine. The sequence is that of Waprin-like protein from Tetramorium bicarinatum (Tramp ant).